The sequence spans 322 residues: Gluconeogenesis factor (322 aa).

NAD(+) is bound by residues T13, 217 to 219 (NVM), 263 to 267 (KYAKE), and 300 to 301 (RH).

Belongs to the gluconeogenesis factor family.

Its subcellular location is the cytoplasm. In terms of biological role, required for morphogenesis under gluconeogenic growth conditions. This is Gluconeogenesis factor from Halalkalibacterium halodurans (strain ATCC BAA-125 / DSM 18197 / FERM 7344 / JCM 9153 / C-125) (Bacillus halodurans).